Here is a 337-residue protein sequence, read N- to C-terminus: Exopolysaccharide phosphotransferase cps2G (337 aa).

It belongs to the stealth family.

The sequence is that of Exopolysaccharide phosphotransferase cps2G (cps2G) from Lactiplantibacillus plantarum (strain ATCC BAA-793 / NCIMB 8826 / WCFS1) (Lactobacillus plantarum).